The chain runs to 304 residues: Acetyl-coenzyme A carboxylase carboxyl transferase subunit beta (304 aa).

The CoA carboxyltransferase N-terminal domain maps to 25–294 (LWIKCPETGE…KAVKRDTATE (270 aa)).

This sequence belongs to the AccD/PCCB family. In terms of assembly, acetyl-CoA carboxylase is a heterohexamer composed of biotin carboxyl carrier protein (AccB), biotin carboxylase (AccC) and two subunits each of ACCase subunit alpha (AccA) and ACCase subunit beta (AccD).

It is found in the cytoplasm. It carries out the reaction N(6)-carboxybiotinyl-L-lysyl-[protein] + acetyl-CoA = N(6)-biotinyl-L-lysyl-[protein] + malonyl-CoA. The protein operates within lipid metabolism; malonyl-CoA biosynthesis; malonyl-CoA from acetyl-CoA: step 1/1. Functionally, component of the acetyl coenzyme A carboxylase (ACC) complex. Biotin carboxylase (BC) catalyzes the carboxylation of biotin on its carrier protein (BCCP) and then the CO(2) group is transferred by the transcarboxylase to acetyl-CoA to form malonyl-CoA. This Rhizobium meliloti (strain 1021) (Ensifer meliloti) protein is Acetyl-coenzyme A carboxylase carboxyl transferase subunit beta.